Consider the following 502-residue polypeptide: Lysine--tRNA ligase (502 aa).

Positions 413 and 420 each coordinate Mg(2+).

The protein belongs to the class-II aminoacyl-tRNA synthetase family. Homodimer. The cofactor is Mg(2+).

The protein resides in the cytoplasm. It catalyses the reaction tRNA(Lys) + L-lysine + ATP = L-lysyl-tRNA(Lys) + AMP + diphosphate. This is Lysine--tRNA ligase from Haemophilus influenzae (strain PittEE).